A 273-amino-acid polypeptide reads, in one-letter code: Formamidopyrimidine-DNA glycosylase (273 aa).

Residue P2 is the Schiff-base intermediate with DNA of the active site. E3 (proton donor) is an active-site residue. K60 functions as the Proton donor; for beta-elimination activity in the catalytic mechanism. Residues H94, R113, and R154 each coordinate DNA. The FPG-type zinc-finger motif lies at 239–273; the sequence is NAYDREGQPCPRCGATIIKTVVAQRGTHYCPECQR. R263 acts as the Proton donor; for delta-elimination activity in catalysis.

The protein belongs to the FPG family. In terms of assembly, monomer. It depends on Zn(2+) as a cofactor.

It catalyses the reaction Hydrolysis of DNA containing ring-opened 7-methylguanine residues, releasing 2,6-diamino-4-hydroxy-5-(N-methyl)formamidopyrimidine.. The enzyme catalyses 2'-deoxyribonucleotide-(2'-deoxyribose 5'-phosphate)-2'-deoxyribonucleotide-DNA = a 3'-end 2'-deoxyribonucleotide-(2,3-dehydro-2,3-deoxyribose 5'-phosphate)-DNA + a 5'-end 5'-phospho-2'-deoxyribonucleoside-DNA + H(+). Its function is as follows. Involved in base excision repair of DNA damaged by oxidation or by mutagenic agents. Acts as a DNA glycosylase that recognizes and removes damaged bases. Has a preference for oxidized purines, such as 7,8-dihydro-8-oxoguanine (8-oxoG). Has AP (apurinic/apyrimidinic) lyase activity and introduces nicks in the DNA strand. Cleaves the DNA backbone by beta-delta elimination to generate a single-strand break at the site of the removed base with both 3'- and 5'-phosphates. In Roseiflexus sp. (strain RS-1), this protein is Formamidopyrimidine-DNA glycosylase.